Consider the following 435-residue polypeptide: Ornithine decarboxylase (435 aa).

Position 76 is an N6-(pyridoxal phosphate)lysine (lysine 76). Pyridoxal 5'-phosphate is bound by residues serine 207, glycine 244, and 283 to 286 (EPGR). 339-340 (FD) contacts substrate. Cysteine 368 serves as the catalytic Proton donor; shared with dimeric partner. Aspartate 369 contacts substrate. Tyrosine 397 lines the pyridoxal 5'-phosphate pocket.

This sequence belongs to the Orn/Lys/Arg decarboxylase class-II family. As to quaternary structure, homodimer. Only the dimer is catalytically active, as the active sites are constructed of residues from both monomers. It depends on pyridoxal 5'-phosphate as a cofactor.

It catalyses the reaction L-ornithine + H(+) = putrescine + CO2. Its pathway is amine and polyamine biosynthesis; putrescine biosynthesis via L-ornithine pathway; putrescine from L-ornithine: step 1/1. Inhibited by antizyme (AZ) in response to polyamine levels. AZ inhibits the assembly of the functional homodimer by binding to ODC monomers and targeting them for ubiquitin-independent proteolytic destruction by the 26S proteasome. Functionally, catalyzes the first and rate-limiting step of polyamine biosynthesis that converts ornithine into putrescine, which is the precursor for the polyamines, spermidine and spermine. Polyamines are essential for cell proliferation and are implicated in cellular processes, ranging from DNA replication to apoptosis. This Panagrellus redivivus (Microworm) protein is Ornithine decarboxylase (ODC).